The chain runs to 210 residues: Large ribosomal subunit protein uL3 (210 aa).

Residues 126 to 167 are disordered; sequence WGFQRGPSGHGSKNIREPGSTGNATFPGRVIKGKKMPGQKGN. Over residues 156 to 167 the composition is skewed to basic residues; the sequence is IKGKKMPGQKGN.

Belongs to the universal ribosomal protein uL3 family. In terms of assembly, part of the 50S ribosomal subunit. Forms a cluster with proteins L14 and L19.

One of the primary rRNA binding proteins, it binds directly near the 3'-end of the 23S rRNA, where it nucleates assembly of the 50S subunit. The chain is Large ribosomal subunit protein uL3 from Syntrophobacter fumaroxidans (strain DSM 10017 / MPOB).